Here is a 160-residue protein sequence, read N- to C-terminus: Large ribosomal subunit protein uL30m (160 aa).

Residues 1–34 (MAGVLRSAFPRPPCRLQTVKKGAESLIGTEWIRH) constitute a mitochondrion transit peptide. The tract at residues 44-64 (KVFQPKPEDHEKYGGDPQNPH) is disordered.

Belongs to the universal ribosomal protein uL30 family. Component of the mitochondrial ribosome large subunit (39S) which comprises a 16S rRNA and about 50 distinct proteins.

The protein localises to the mitochondrion. In Mus musculus (Mouse), this protein is Large ribosomal subunit protein uL30m (Mrpl30).